The chain runs to 680 residues: E3 ubiquitin-protein ligase brl2 (680 aa).

Positions Arg-44–Leu-72 form a coiled coil. A disordered region spans residues Pro-206–Gln-233. Positions Lys-210–Ser-229 are enriched in basic and acidic residues. 3 coiled-coil regions span residues Leu-261–Lys-288, Met-353–Val-399, and Asp-485–Thr-609. The segment at Cys-627–Gly-667 adopts an RING-type zinc-finger fold.

It belongs to the BRE1 family. As to quaternary structure, component of the histone H2B ubiquitin ligase complex (HULC) composed of at least brl1, brl2, rhp6 and shf1.

Its subcellular location is the nucleus. It carries out the reaction S-ubiquitinyl-[E2 ubiquitin-conjugating enzyme]-L-cysteine + [acceptor protein]-L-lysine = [E2 ubiquitin-conjugating enzyme]-L-cysteine + N(6)-ubiquitinyl-[acceptor protein]-L-lysine.. It functions in the pathway protein modification; protein ubiquitination. E3 ubiquitin-protein ligase which belongs to the histone H2B ubiquitin ligase complex (HULC) which mediates monoubiquitination of histone H2B to form H2BK123ub1. H2BK123ub1 gives a specific tag for epigenetic transcriptional activation and is also a prerequisite for H3K4me and H3K79me formation. This is E3 ubiquitin-protein ligase brl2 (brl2) from Schizosaccharomyces pombe (strain 972 / ATCC 24843) (Fission yeast).